The primary structure comprises 64 residues: Large ribosomal subunit protein eL24 (64 aa).

Cys6, Cys9, Cys32, and Cys36 together coordinate Zn(2+). The C4-type zinc finger occupies 6–36; the sequence is CNFCGKSIEPGTGKKFVKKDGSVMFICSSKC.

It belongs to the eukaryotic ribosomal protein eL24 family. Part of the 50S ribosomal subunit. Forms a cluster with proteins L3 and L14. Zn(2+) is required as a cofactor.

Binds to the 23S rRNA. The polypeptide is Large ribosomal subunit protein eL24 (Methanococcus aeolicus (strain ATCC BAA-1280 / DSM 17508 / OCM 812 / Nankai-3)).